Reading from the N-terminus, the 236-residue chain is Purine nucleoside phosphorylase DeoD-type (236 aa).

Position 4 (His-4) interacts with a purine D-ribonucleoside. Residues Gly-20, Arg-24, Arg-43, and 87–90 (RVGT) contribute to the phosphate site. A purine D-ribonucleoside-binding positions include 178-180 (EME) and 202-203 (SD). Catalysis depends on Asp-203, which acts as the Proton donor.

The protein belongs to the PNP/UDP phosphorylase family. Homohexamer; trimer of homodimers.

The catalysed reaction is a purine D-ribonucleoside + phosphate = a purine nucleobase + alpha-D-ribose 1-phosphate. It catalyses the reaction a purine 2'-deoxy-D-ribonucleoside + phosphate = a purine nucleobase + 2-deoxy-alpha-D-ribose 1-phosphate. Catalyzes the reversible phosphorolytic breakdown of the N-glycosidic bond in the beta-(deoxy)ribonucleoside molecules, with the formation of the corresponding free purine bases and pentose-1-phosphate. The chain is Purine nucleoside phosphorylase DeoD-type from Geobacillus kaustophilus (strain HTA426).